Reading from the N-terminus, the 304-residue chain is ULP1-interacting protein 4 (304 aa).

The interval 72–269 (DEYPKEVDEH…SIVKEGDANT (198 aa)) is disordered. Over residues 73–83 (EYPKEVDEHSN) the composition is skewed to basic and acidic residues. Polar residues predominate over residues 129–149 (TPSLKGNVTFPSPKTAISQDG). Phosphoserine is present on serine 140. Residues 155-183 (ETTRKERKYEHAPLNEVPVERDPKEENKE) show a composition bias toward basic and acidic residues. Serine 185 and serine 205 each carry phosphoserine.

As to quaternary structure, interacts with ULP1.

It localises to the endoplasmic reticulum membrane. The protein resides in the mitochondrion outer membrane. It is found in the nucleus envelope. The protein is ULP1-interacting protein 4 (UIP4) of Saccharomyces cerevisiae (strain ATCC 204508 / S288c) (Baker's yeast).